We begin with the raw amino-acid sequence, 437 residues long: Cytochrome b (437 aa).

The helical transmembrane segment at 45-65 (WIWGIVLAFTLVLQIVTGIVL) threads the bilayer. Heme b contacts are provided by H97 and H111. A run of 9 helical transmembrane segments spans residues 100–120 (GASL…YYGS), 129–149 (WIVG…GYVL), 156–176 (FWGA…GPSI), 194–214 (FFSL…IHIW), 248–268 (FVIK…AVVA), 298–318 (FLPF…VILV), 330–350 (FFGV…PWLD), 365–385 (MWFW…AMPT), and 391–411 (WISL…LPLL). 2 residues coordinate heme b: H198 and H212.

Belongs to the cytochrome b family. In terms of assembly, the main subunits of complex b-c1 are: cytochrome b, cytochrome c1 and the Rieske protein. It depends on heme b as a cofactor.

It is found in the cell membrane. Its function is as follows. Component of the ubiquinol-cytochrome c reductase complex (complex III or cytochrome b-c1 complex), which is a respiratory chain that generates an electrochemical potential coupled to ATP synthesis. In Rhodobacter capsulatus (Rhodopseudomonas capsulata), this protein is Cytochrome b (petB).